A 373-amino-acid chain; its full sequence is Glutamate 5-kinase (373 aa).

Lysine 16 is a binding site for ATP. Residues serine 56, aspartate 143, and asparagine 155 each coordinate substrate. Position 175–176 (175–176 (TD)) interacts with ATP. The region spanning 281–359 (RGVVTLDDGA…TKIETLLGYK (79 aa)) is the PUA domain.

It belongs to the glutamate 5-kinase family.

Its subcellular location is the cytoplasm. It carries out the reaction L-glutamate + ATP = L-glutamyl 5-phosphate + ADP. It participates in amino-acid biosynthesis; L-proline biosynthesis; L-glutamate 5-semialdehyde from L-glutamate: step 1/2. Functionally, catalyzes the transfer of a phosphate group to glutamate to form L-glutamate 5-phosphate. The sequence is that of Glutamate 5-kinase from Teredinibacter turnerae (strain ATCC 39867 / T7901).